The sequence spans 451 residues: Phenolic glucoside malonyltransferase 2 (451 aa).

The Proton acceptor role is filled by H165. The HXXXD motif motif lies at H165–D169. Malonyl-CoA-binding positions include H270 and S272–T273. Catalysis depends on D395, which acts as the Proton acceptor. The DFGWG motif signature appears at D395–G399.

This sequence belongs to the plant acyltransferase family. Phenolic glucoside malonyltransferase subfamily.

It carries out the reaction a flavonol 7-O-beta-D-glucoside + malonyl-CoA = a flavonol 7-O-(6-O-malonyl-beta-D-glucoside) + CoA. Malonyltransferase acting on xenobiotic glucosides. Has activity toward 2-Naphthol glucoside (2NAG), 1-Naphthol glucoside (1NAG), kaempferol 7-O-glucoside, hydroxycoumarin glucosides and phenol-glucosides, but not toward kaempferol 3-O-glucoside or daidzin. Prefers phenol glucosides rather than naphtol glucosides. In vivo, seems to be involved in the malonylation of 4-methylumbelliferone glucoside or 4-nitrophenyl glucoside while PMAT1 would be involved in the malonylation of 2-Naphthol glucoside. The sequence is that of Phenolic glucoside malonyltransferase 2 (PMAT2) from Arabidopsis thaliana (Mouse-ear cress).